Here is a 237-residue protein sequence, read N- to C-terminus: Uridylate kinase (237 aa).

12–15 (KLSG) provides a ligand contact to ATP. Gly-53 is a UMP binding site. ATP contacts are provided by Gly-54 and Arg-58. Residues Asp-73 and 134–141 (TGNPYFTT) each bind UMP. ATP-binding residues include Thr-161, Tyr-167, and Asp-170.

Belongs to the UMP kinase family. In terms of assembly, homohexamer.

The protein localises to the cytoplasm. The catalysed reaction is UMP + ATP = UDP + ADP. It functions in the pathway pyrimidine metabolism; CTP biosynthesis via de novo pathway; UDP from UMP (UMPK route): step 1/1. With respect to regulation, inhibited by UTP. In terms of biological role, catalyzes the reversible phosphorylation of UMP to UDP. The chain is Uridylate kinase from Rhizorhabdus wittichii (strain DSM 6014 / CCUG 31198 / JCM 15750 / NBRC 105917 / EY 4224 / RW1) (Sphingomonas wittichii).